The sequence spans 483 residues: Islet cell autoantigen 1 (483 aa).

In terms of domain architecture, AH spans 51 to 254 (ASDADLDAKL…TSHTMAAIHE (204 aa)). The interval 281-321 (EEKKKINQQESTDAAVQEPSQLISLEEENQRKESSSFKTED) is disordered. Positions 288-303 (QQESTDAAVQEPSQLI) are enriched in polar residues. The segment covering 308-321 (ENQRKESSSFKTED) has biased composition (basic and acidic residues).

In terms of tissue distribution, expressed abundantly in pancreas, heart and brain with low levels of expression in lung, kidney, liver and thyroid.

The protein resides in the cytoplasm. The protein localises to the cytosol. It is found in the golgi apparatus membrane. Its subcellular location is the cytoplasmic vesicle. It localises to the secretory vesicle membrane. The protein resides in the secretory vesicle. The protein localises to the synaptic vesicle membrane. May play a role in neurotransmitter secretion. This chain is Islet cell autoantigen 1 (ICA1), found in Homo sapiens (Human).